Here is a 427-residue protein sequence, read N- to C-terminus: Phosphatidylinositol 4-phosphate 5-kinase 10 (427 aa).

Residues 1 to 419 (MFTREITAKD…RFQDFVSQIF (419 aa)) form the PIPK domain. 2 disordered regions span residues 247–287 (SRGS…DSEN) and 334–355 (MKIP…VGKQ). The segment at 379 to 400 (YGVRKRLEHCYKSIQHSSKTIS) is activation loop.

It carries out the reaction a 1,2-diacyl-sn-glycero-3-phospho-(1D-myo-inositol 4-phosphate) + ATP = a 1,2-diacyl-sn-glycero-3-phospho-(1D-myo-inositol-4,5-bisphosphate) + ADP + H(+). The polypeptide is Phosphatidylinositol 4-phosphate 5-kinase 10 (PIP5K10) (Arabidopsis thaliana (Mouse-ear cress)).